Consider the following 316-residue polypeptide: 4-diphosphocytidyl-2-C-methyl-D-erythritol kinase (316 aa).

Lys-32 is an active-site residue. Residue 126-136 (PVGAGLGGGSA) participates in ATP binding. The active site involves Asp-168.

It belongs to the GHMP kinase family. IspE subfamily.

The enzyme catalyses 4-CDP-2-C-methyl-D-erythritol + ATP = 4-CDP-2-C-methyl-D-erythritol 2-phosphate + ADP + H(+). The protein operates within isoprenoid biosynthesis; isopentenyl diphosphate biosynthesis via DXP pathway; isopentenyl diphosphate from 1-deoxy-D-xylulose 5-phosphate: step 3/6. Catalyzes the phosphorylation of the position 2 hydroxy group of 4-diphosphocytidyl-2C-methyl-D-erythritol. In Bifidobacterium longum (strain NCC 2705), this protein is 4-diphosphocytidyl-2-C-methyl-D-erythritol kinase.